Reading from the N-terminus, the 193-residue chain is Interferon lambda-3 (193 aa).

The N-terminal stretch at 1–19 (MLLLLLPLLLAAVLTRTQA) is a signal peptide. 3 cysteine pairs are disulfide-bonded: Cys-35/Cys-132, Cys-69/Cys-166, and Cys-185/Cys-192.

This sequence belongs to the lambda interferon family.

The protein localises to the secreted. In terms of biological role, cytokine with antiviral, antitumour and immunomodulatory activities. Plays a critical role in the antiviral host defense, predominantly in the epithelial tissues. Acts as a ligand for the heterodimeric class II cytokine receptor composed of IL10RB and IFNLR1, and receptor engagement leads to the activation of the JAK/STAT signaling pathway resulting in the expression of IFN-stimulated genes (ISG), which mediate the antiviral state. Has a restricted receptor distribution and therefore restricted targets: is primarily active in epithelial cells and this cell type-selective action is because of the epithelial cell-specific expression of its receptor IFNLR1. Seems not to be essential for early virus-activated host defense in vaginal infection, but plays an important role in Toll-like receptor (TLR)-induced antiviral defense. Plays a significant role in the antiviral immune defense in the intestinal epithelium. Exerts an immunomodulatory effect by up-regulating MHC class I antigen expression. This chain is Interferon lambda-3 (Ifnl3), found in Mus musculus (Mouse).